The primary structure comprises 520 residues: Serine protease Hip1 (520 aa).

A signal peptide spans 1-30; the sequence is MGMRLSRRDKIARMLLIWAALAAVALVLVG. Cysteine 31 carries N-palmitoyl cysteine lipidation. Residue cysteine 31 is the site of S-diacylglycerol cysteine attachment. Residues 102–497 form the AB hydrolase-1 domain; that stretch reads GSLVINPGGP…TQHTVVFQGD (396 aa). The Nucleophile role is filled by serine 228. The active site involves aspartate 463. Histidine 490 (proton donor) is an active-site residue.

This sequence belongs to the peptidase S33 family.

It localises to the cell envelope. Its subcellular location is the cell membrane. Serine protease that promotes pathogenesis by promoting the processing and the extracellular release of the M.bovis heat-shock protein GroEL2. In terms of biological role, key immunomodulatory virulence factor, which promotes survival in host macrophages and modulates host immune responses. The protein is Serine protease Hip1 of Mycobacterium bovis (strain ATCC BAA-935 / AF2122/97).